The following is a 518-amino-acid chain: Probable cyclic di-GMP phosphodiesterase PdeN (518 aa).

2 helical membrane-spanning segments follow: residues 16–36 and 236–256; these read CIVAGVMIAILVSCLQFLVAW and VWYAFLLGGMSGTVVGLLCYY. Residues 261–514 enclose the EAL domain; that stretch reads RMRPGREIMT…DFVRWLKKPY (254 aa).

It localises to the cell inner membrane. The catalysed reaction is 3',3'-c-di-GMP + H2O = 5'-phosphoguanylyl(3'-&gt;5')guanosine + H(+). In terms of biological role, phosphodiesterase (PDE) that catalyzes the hydrolysis of cyclic-di-GMP (c-di-GMP) to 5'-pGpG. The protein is Probable cyclic di-GMP phosphodiesterase PdeN of Escherichia coli (strain K12).